Consider the following 699-residue polypeptide: Glycine--tRNA ligase beta subunit (699 aa).

It belongs to the class-II aminoacyl-tRNA synthetase family. As to quaternary structure, tetramer of two alpha and two beta subunits.

The protein resides in the cytoplasm. The catalysed reaction is tRNA(Gly) + glycine + ATP = glycyl-tRNA(Gly) + AMP + diphosphate. The polypeptide is Glycine--tRNA ligase beta subunit (Methylobacterium radiotolerans (strain ATCC 27329 / DSM 1819 / JCM 2831 / NBRC 15690 / NCIMB 10815 / 0-1)).